The following is a 346-amino-acid chain: Melanoma-associated antigen B4 (346 aa).

Positions 1 to 18 are enriched in basic residues; the sequence is MPRGQKSKLRAREKRQRT. The disordered stretch occupies residues 1 to 107; sequence MPRGQKSKLR…STSTERSLKD (107 aa). The span at 45-54 shows a compositional bias: polar residues; it reads VLRDTASSSL. The span at 92–101 shows a compositional bias: low complexity; that stretch reads ASSSQASTST. An MAGE domain is found at 109 to 307; it reads LTRKTKMLVQ…NNFPLLYEEA (199 aa). The disordered stretch occupies residues 311 to 346; it reads EEERAGARPRVAARRGTTAMTSAYSRATSSSSSQPM. Low complexity predominate over residues 318 to 346; it reads RPRVAARRGTTAMTSAYSRATSSSSSQPM.

In terms of tissue distribution, expressed in testis.

It is found in the cytoplasm. The sequence is that of Melanoma-associated antigen B4 (MAGEB4) from Homo sapiens (Human).